The following is a 430-amino-acid chain: Adenylosuccinate synthetase (430 aa).

Residues 11–17 (GDEGKGK) and 39–41 (GHS) contribute to the GTP site. Asp12 acts as the Proton acceptor in catalysis. Residues Asp12 and Gly39 each contribute to the Mg(2+) site. Residues 12 to 15 (DEGK), 37 to 40 (NAGH), Thr129, Arg143, Asn221, Thr236, and Arg300 each bind IMP. His40 serves as the catalytic Proton donor. 296–302 (VSTGRKR) lines the substrate pocket. GTP contacts are provided by residues Arg302, 328–330 (KLD), and 412–414 (GTG).

It belongs to the adenylosuccinate synthetase family. As to quaternary structure, homodimer. Mg(2+) is required as a cofactor.

Its subcellular location is the cytoplasm. It catalyses the reaction IMP + L-aspartate + GTP = N(6)-(1,2-dicarboxyethyl)-AMP + GDP + phosphate + 2 H(+). It functions in the pathway purine metabolism; AMP biosynthesis via de novo pathway; AMP from IMP: step 1/2. Plays an important role in the de novo pathway and in the salvage pathway of purine nucleotide biosynthesis. Catalyzes the first committed step in the biosynthesis of AMP from IMP. The chain is Adenylosuccinate synthetase from Sordaria macrospora (strain ATCC MYA-333 / DSM 997 / K(L3346) / K-hell).